The primary structure comprises 737 residues: Protein-glucosylgalactosylhydroxylysine glucosidase (737 aa).

W300–D301 provides a ligand contact to substrate. Catalysis depends on E430, which acts as the Proton donor. Position 498–499 (K498–Q499) interacts with substrate. Positions R681 to E737 are disordered. Residues L721–L730 are compositionally biased toward polar residues.

This sequence belongs to the glycosyl hydrolase 65 family.

It carries out the reaction (5R)-5-O-[alpha-D-glucosyl-(1-&gt;2)-beta-D-galactosyl]-5-hydroxy-L-lysyl-[collagen] + H2O = (5R)-5-O-(beta-D-galactosyl)-5-hydroxy-L-lysyl-[collagen] + D-glucose. Its function is as follows. Catalyzes the hydrolysis of glucose from the disaccharide unit linked to hydroxylysine residues of collagen and collagen-like proteins. The chain is Protein-glucosylgalactosylhydroxylysine glucosidase from Homo sapiens (Human).